Reading from the N-terminus, the 1015-residue chain is Collagen alpha-2(I) chain (1015 aa).

A disordered region spans residues 1-1015 (SGGFDFSFLP…FGYEGDFYRA (1015 aa)). A 4-hydroxyproline mark is found at P10 and P13. The segment covering 20–30 (KGVGLGPGPMG) has biased composition (gly residues). At P38 the chain carries 4-hydroxyproline. Residues 43–69 (QGPAGEPGEPGQTGPAGARGPAGPPGK) are compositionally biased toward low complexity. The span at 70 to 84 (AGEDGHPGKPGRPGE) shows a compositional bias: basic and acidic residues. 5-hydroxylysine; alternate is present on K106. O-linked (Gal...) hydroxylysine; alternate glycosylation is present at K106. Composition is skewed to low complexity over residues 140–169 (VGAPGPAGARGSDGSVGPVGPAGPIGSAGP), 194–208 (AGPRGEQGLPGVSGP), and 235–250 (PGPVGAVGATGARGLV). Residues 302-311 (GLRGGPGSRG) show a composition bias toward gly residues. Positions 324–340 (PAGSRGASGPAGVRGPS) are enriched in low complexity. 4-hydroxyproline is present on residues P346 and P349. Residues 441-450 (GVQGGKGEQG) show a composition bias toward gly residues. Over residues 497–514 (PGESGAAGPVGPIGSRGP) the composition is skewed to low complexity. A compositionally biased stretch (gly residues) spans 534–545 (GTAGPGSGGLPG). Composition is skewed to low complexity over residues 568-612 (VGTT…PRGS) and 619-639 (VGPAGPNGFAGPAGAAGQPGA). Positions 640-649 (KGERGTKGPK) are enriched in basic and acidic residues. Over residues 657 to 670 (PTGPVGAAGPSGPN) the composition is skewed to low complexity. Over residues 674-686 (GPAGGRGDGGPPG) the composition is skewed to gly residues. Over residues 687–697 (LTGFPGAAGRT) the composition is skewed to low complexity. A compositionally biased stretch (gly residues) spans 734–743 (GETGAGGPPG). 4 stretches are compositionally biased toward low complexity: residues 751–778 (SGEPGTAGPPGTAGPQGLLGAPGILGLP), 786–799 (LPGVAGAVGEPGPL), 846–868 (YAGNAGPVGAAGAPGPHGTVGPA), and 877–897 (PGPAGSVGPVGAVGPRGPSGP). The segment covering 901-912 (RGDKGEAGDKGP) has biased composition (basic and acidic residues). Over residues 987–997 (PAGPPGPPGPP) the composition is skewed to pro residues.

This sequence belongs to the fibrillar collagen family. As to quaternary structure, trimers of one alpha 2(I) and two alpha 1(I) chains. Interacts (via C-terminus) with TMEM131 (via PapD-L domain); the interaction is direct and is involved in assembly and TRAPPIII ER-to-Golgi transport complex-dependent secretion of collagen. Prolines at the third position of the tripeptide repeating unit (G-X-Y) are hydroxylated in some or all of the chains. Expressed in bones.

The protein resides in the secreted. It localises to the extracellular space. It is found in the extracellular matrix. Type I collagen is a member of group I collagen (fibrillar forming collagen). The protein is Collagen alpha-2(I) chain of Doedicurus sp. (South American giant glyptodont).